A 252-amino-acid polypeptide reads, in one-letter code: 2-succinyl-6-hydroxy-2,4-cyclohexadiene-1-carboxylate synthase (252 aa).

It belongs to the AB hydrolase superfamily. MenH family. Monomer.

The enzyme catalyses 5-enolpyruvoyl-6-hydroxy-2-succinyl-cyclohex-3-ene-1-carboxylate = (1R,6R)-6-hydroxy-2-succinyl-cyclohexa-2,4-diene-1-carboxylate + pyruvate. It participates in quinol/quinone metabolism; 1,4-dihydroxy-2-naphthoate biosynthesis; 1,4-dihydroxy-2-naphthoate from chorismate: step 3/7. Its pathway is quinol/quinone metabolism; menaquinone biosynthesis. Functionally, catalyzes a proton abstraction reaction that results in 2,5-elimination of pyruvate from 2-succinyl-5-enolpyruvyl-6-hydroxy-3-cyclohexene-1-carboxylate (SEPHCHC) and the formation of 2-succinyl-6-hydroxy-2,4-cyclohexadiene-1-carboxylate (SHCHC). This is 2-succinyl-6-hydroxy-2,4-cyclohexadiene-1-carboxylate synthase from Salmonella enteritidis PT4 (strain P125109).